The following is a 166-amino-acid chain: Small ribosomal subunit protein uS5 (166 aa).

An S5 DRBM domain is found at 11–74; it reads LREKLVAINR…EKARANMKRV (64 aa).

Belongs to the universal ribosomal protein uS5 family. In terms of assembly, part of the 30S ribosomal subunit. Contacts proteins S4 and S8.

Its function is as follows. With S4 and S12 plays an important role in translational accuracy. Functionally, located at the back of the 30S subunit body where it stabilizes the conformation of the head with respect to the body. This chain is Small ribosomal subunit protein uS5, found in Alkalilimnicola ehrlichii (strain ATCC BAA-1101 / DSM 17681 / MLHE-1).